The chain runs to 258 residues: (7aS)-7a-methyl-1,5-dioxo-2,3,5,6,7,7a-hexahydro-1H-indene-carboxyl-CoA hydrolase (258 aa).

The protein belongs to the enoyl-CoA hydratase/isomerase family.

It carries out the reaction (7aS)-7a-methyl-1,5-dioxo-2,3,5,6,7,7a-hexahydro-1H-indene-carboxyl-CoA + H2O = (3E)-2-(2-carboxylatoethyl)-3-methyl-6-oxocyclohex-1-ene-1-carboxyl-CoA + H(+). Its pathway is steroid metabolism; cholesterol degradation. Involved in the final steps of cholesterol and steroid degradation. Catalyzes the hydrolytic ring D opening of (7aS)-7a-methyl-1,5-dioxo-2,3,5,6,7,7a-hexahydro-1H-indene-carboxyl-CoA (HIEC-CoA) to (3E)-2-(2-carboxylatoethyl)-3-methyl-6-oxocyclohex-1-ene-1-carboxyl-CoA (COCHEA-CoA). This is (7aS)-7a-methyl-1,5-dioxo-2,3,5,6,7,7a-hexahydro-1H-indene-carboxyl-CoA hydrolase from Rhodococcus jostii (strain RHA1).